The chain runs to 138 residues: Basic phospholipase A2 homolog promutoxin (138 aa).

A signal peptide spans 1–16 (MRTLWIMAVLLLGVEG). Cystine bridges form between Cys42-Cys132, Cys44-Cys60, Cys59-Cys112, Cys65-Cys138, Cys66-Cys105, Cys73-Cys98, and Cys91-Cys103. The interval 122–133 (KKHRVTMKFLCK) is important for membrane-damaging activities in eukaryotes and bacteria; heparin-binding.

It belongs to the phospholipase A2 family. Group II subfamily. R49 sub-subfamily. As to quaternary structure, homodimer; non-covalently linked. In terms of tissue distribution, expressed by the venom gland.

The protein resides in the secreted. Functionally, snake venom phospholipase A2 homolog that lacks enzymatic activity. Exhibits potent myotoxicity causing myonecrosis and edema in the gastrocnemius muscle of mice. Is also able to stimulate the release of IL12 (IL12A-IL12B), TNF-alpha (TNF), IL6 and IL1-beta (IL1B) from human monocytes, and induce IL2, TNFalpha and IL6 release from T-cells. A model of myotoxic mechanism has been proposed: an apo Lys49-PLA2 is activated by the entrance of a hydrophobic molecule (e.g. fatty acid) at the hydrophobic channel of the protein leading to a reorientation of a monomer. This reorientation causes a transition between 'inactive' to 'active' states, causing alignment of C-terminal and membrane-docking sites (MDoS) side-by-side and putting the membrane-disruption sites (MDiS) in the same plane, exposed to solvent and in a symmetric position for both monomers. The MDoS region stabilizes the toxin on membrane by the interaction of charged residues with phospholipid head groups. Subsequently, the MDiS region destabilizes the membrane with penetration of hydrophobic residues. This insertion causes a disorganization of the membrane, allowing an uncontrolled influx of ions (i.e. calcium and sodium), and eventually triggering irreversible intracellular alterations and cell death. In Protobothrops mucrosquamatus (Taiwan habu), this protein is Basic phospholipase A2 homolog promutoxin.